Consider the following 203-residue polypeptide: uncharacterized protein (203 aa).

This is an uncharacterized protein from Pasteurella multocida (strain Pm70).